The following is a 606-amino-acid chain: Glutamine--fructose-6-phosphate aminotransferase [isomerizing] (606 aa).

The active-site Nucleophile; for GATase activity is Cys-2. In terms of domain architecture, Glutamine amidotransferase type-2 spans 2 to 217 (CGIIGIVGKE…EGDYVALDHD (216 aa)). SIS domains are found at residues 280-421 (VPGD…ARGT) and 454-596 (IAAD…VDQP). Residue Lys-601 is the For Fru-6P isomerization activity of the active site.

In terms of assembly, homodimer.

It localises to the cytoplasm. It carries out the reaction D-fructose 6-phosphate + L-glutamine = D-glucosamine 6-phosphate + L-glutamate. In terms of biological role, catalyzes the first step in hexosamine metabolism, converting fructose-6P into glucosamine-6P using glutamine as a nitrogen source. This Caulobacter vibrioides (strain ATCC 19089 / CIP 103742 / CB 15) (Caulobacter crescentus) protein is Glutamine--fructose-6-phosphate aminotransferase [isomerizing].